A 388-amino-acid polypeptide reads, in one-letter code: MICGANATNGTNATKEYTLLVALPLSIAVGLLILLIIFGNVLVIIAVFTSRALRAPQNLFLVSLASADILVATLVMPFSLANELMGMWTFGGVWCEIYLALDVLFCTASITHLCAISLDRYWSITQAIEYNLKRTPQRIKRIIFIVWIIAAVISCPPLITMKKSEGDICDINKEKWYIVSSCIGSFFLPCIIMVLVYIRIYQIAKKRTRAPPGDHRKNEVGKKENDPHEKLNGIQNAEPDDKDEINGVDMEESSSSDHKVSNPCSLKKKSSKGKTKLSQIKPGDGDKTEACQTTKASRWKGRQNREKRFTFVLAVVIGVFVICWFPFFFTYTFTAFCDCCVPETLFKFFFWFGYCNSSLNPIIYTIFNNDFRRSFKKILCRRDKRRVV.

Over 1-22 (MICGANATNGTNATKEYTLLVA) the chain is Extracellular. Residues Asn6, Asn9, and Asn12 are each glycosylated (N-linked (GlcNAc...) asparagine). The helical transmembrane segment at 23-48 (LPLSIAVGLLILLIIFGNVLVIIAVF) threads the bilayer. Topologically, residues 49–59 (TSRALRAPQNL) are cytoplasmic. Residues 60-85 (FLVSLASADILVATLVMPFSLANELM) form a helical membrane-spanning segment. Over 86–95 (GMWTFGGVWC) the chain is Extracellular. An intrachain disulfide couples Cys95 to Cys169. A helical membrane pass occupies residues 96 to 118 (EIYLALDVLFCTASITHLCAISL). The Cytoplasmic segment spans residues 119 to 138 (DRYWSITQAIEYNLKRTPQR). The helical transmembrane segment at 139–162 (IKRIIFIVWIIAAVISCPPLITMK) threads the bilayer. The Extracellular portion of the chain corresponds to 163-173 (KSEGDICDINK). The chain crosses the membrane as a helical span at residues 174–198 (EKWYIVSSCIGSFFLPCIIMVLVYI). The Cytoplasmic segment spans residues 199–311 (RIYQIAKKRT…RQNREKRFTF (113 aa)). Residues 208-291 (TRAPPGDHRK…PGDGDKTEAC (84 aa)) form a disordered region. Over residues 212–231 (PGDHRKNEVGKKENDPHEKL) the composition is skewed to basic and acidic residues. The segment covering 266–275 (LKKKSSKGKT) has biased composition (basic residues). Residues 312 to 337 (VLAVVIGVFVICWFPFFFTYTFTAFC) traverse the membrane as a helical segment. At 338 to 344 (DCCVPET) the chain is on the extracellular side. A helical membrane pass occupies residues 345-368 (LFKFFFWFGYCNSSLNPIIYTIFN). Residues 369–388 (NDFRRSFKKILCRRDKRRVV) lie on the Cytoplasmic side of the membrane. The S-palmitoyl cysteine moiety is linked to residue Cys380.

Belongs to the G-protein coupled receptor 1 family. Adrenergic receptor subfamily. ADRA2A sub-subfamily.

The protein localises to the cell membrane. Its function is as follows. Alpha-2 adrenergic receptors mediate the catecholamine-induced inhibition of adenylate cyclase through the action of G proteins. The order of potency for this receptor is dexmedetomidine &gt; oxymetazoline = epinephrine &gt; norepinephrine. This chain is Alpha-2A adrenergic receptor, found in Danio rerio (Zebrafish).